The chain runs to 370 residues: Cell division protein DivIB (370 aa).

The tract at residues 1–65 (MKKKKDEELT…SNKKGTKRIV (65 aa)) is disordered. The Cytoplasmic segment spans residues 1 to 74 (MKKKKDEELT…VKEQRLSRQK (74 aa)). Composition is skewed to basic residues over residues 25 to 34 (SRFKRKRKAT) and 47 to 63 (RNNR…GTKR). Residues 75 to 95 (LGILIGSTLIVIALFFGYFYS) form a helical membrane-spanning segment. At 96 to 370 (SISRVQKFSV…STVNTQQDID (275 aa)) the chain is on the extracellular side. The POTRA domain maps to 98–169 (SRVQKFSVSG…GKVKIKVKEN (72 aa)). The tract at residues 295 to 370 (SGWTDEAKAA…STVNTQQDID (76 aa)) is disordered. Low complexity-rich tracts occupy residues 304–314 (ASESSKSAESS) and 327–342 (SESA…STET). A compositionally biased stretch (polar residues) spans 356-370 (SSNAESTVNTQQDID).

This sequence belongs to the FtsQ/DivIB family. DivIB subfamily.

Its subcellular location is the cell membrane. Its function is as follows. Cell division protein that may be involved in stabilizing or promoting the assembly of the division complex. This Pediococcus pentosaceus (strain ATCC 25745 / CCUG 21536 / LMG 10740 / 183-1w) protein is Cell division protein DivIB.